The following is a 460-amino-acid chain: GTPase Der (460 aa).

2 EngA-type G domains span residues 4-174 (PQVA…PRRE) and 184-361 (PKIA…AERS). GTP contacts are provided by residues 10–17 (GRPNVGKS), 57–61 (DTGGL), 126–129 (NKAE), 190–197 (GRPNVGKS), 237–241 (DTAGI), and 302–305 (NKWD). A KH-like domain is found at 362 to 446 (RRIPTAELNQ…PIELVFRERE (85 aa)).

Belongs to the TRAFAC class TrmE-Era-EngA-EngB-Septin-like GTPase superfamily. EngA (Der) GTPase family. As to quaternary structure, associates with the 50S ribosomal subunit.

In terms of biological role, GTPase that plays an essential role in the late steps of ribosome biogenesis. The chain is GTPase Der from Thermomicrobium roseum (strain ATCC 27502 / DSM 5159 / P-2).